The sequence spans 314 residues: tRNA pseudouridine synthase B (314 aa).

Substrate is bound at residue His-43. Catalysis depends on Asp-48, which acts as the Nucleophile. Residues Tyr-76, Tyr-179, and Leu-200 each contribute to the substrate site.

This sequence belongs to the pseudouridine synthase TruB family. Type 1 subfamily.

It catalyses the reaction uridine(55) in tRNA = pseudouridine(55) in tRNA. In terms of biological role, responsible for synthesis of pseudouridine from uracil-55 in the psi GC loop of transfer RNAs. This chain is tRNA pseudouridine synthase B, found in Shigella flexneri.